The primary structure comprises 484 residues: Antibiotic efflux pump outer membrane protein ArpC (484 aa).

A signal peptide spans 1 to 17 (MTKSLLSLAVTAFILGG). C18 is lipidated: N-palmitoyl cysteine. Residue C18 is the site of S-diacylglycerol cysteine attachment.

Belongs to the outer membrane factor (OMF) (TC 1.B.17) family.

Its subcellular location is the cell outer membrane. The outer membrane component of an antibiotic efflux pump. Confers resistance to numerous structurally unrelated antibiotics such as carbenicillin, chloramphenicol, erythromycin, novobiocin, streptomycin and tetracycline. Is not involved in organic solvent efflux. The protein is Antibiotic efflux pump outer membrane protein ArpC (arpC) of Pseudomonas putida (Arthrobacter siderocapsulatus).